We begin with the raw amino-acid sequence, 282 residues long: Homeobox protein pv.1 (282 aa).

Composition is skewed to basic and acidic residues over residues 17–26 and 44–59; these read EEAADGKDSM and YAKEMPRRKDGQDVQE. A disordered region spans residues 17–128; the sequence is EEAADGKDSM…HRGESPKSDL (112 aa). 2 stretches are compositionally biased toward polar residues: residues 86-96 and 103-114; these read WGSSDDFSSVG and EGSPSPMRNSQE. A compositionally biased stretch (basic and acidic residues) spans 116–128; it reads ETDHRGESPKSDL. The segment at residues 129-188 is a DNA-binding region (homeobox); the sequence is QRHLRTAFTPQQISKLEQAFNKQRYLGASERKKLATSLRLSEIQVKTWFQNRRMKLKRQI.

In terms of tissue distribution, expressed in the ventral marginal zone of blastulae. At early gastrulation, expression begins to spread to the animal pole (ectoderm), and at stage 11.5 is expressed in a gradient across the animal cap, with levels highest in the ventral region. At the end of gastrulation, predominantly localized to the ventral and lateral regions of the closing slit blastopore. Also expressed at a low level in ventral endoderm.

It is found in the nucleus. Functionally, transcriptional repressor. Acts in a ventral signaling pathway downstream of bmp4, which suppresses dorsal mesoderm formation and leads to both ventral mesoderm and ventral ectoderm formation. Acts in the ectoderm to simultaneously specify epidermal lineages and restrict neuralization. Represses transcription of dorsal-specific genes. Binds to DNA, with preference for the target sequences 5'-TAATGC-3' and 5'-TAATTG-3'. Acts in a pathway downstream of bmp4 and fgf to negatively regulate erythroid specification. The polypeptide is Homeobox protein pv.1 (Xenopus laevis (African clawed frog)).